The chain runs to 433 residues: GTPase Obg (433 aa).

Positions 1-159 constitute an Obg domain; sequence MAITDYCECR…LNVSLEVKYL (159 aa). The OBG-type G domain maps to 160-329; the sequence is ANVGIVGFPN…LLDRVFELYN (170 aa). GTP contacts are provided by residues 166–173, 191–195, 212–215, 282–285, and 310–312; these read GFPNSGKS, FTTLI, DIPG, NKID, and ISA. Mg(2+)-binding residues include Ser-173 and Thr-193. One can recognise an OCT domain in the interval 355 to 433; that stretch reads TNENNNDPLN…FDGCEFVIND (79 aa).

It belongs to the TRAFAC class OBG-HflX-like GTPase superfamily. OBG GTPase family. In terms of assembly, monomer. Mg(2+) is required as a cofactor.

It is found in the cytoplasm. Functionally, an essential GTPase which binds GTP, GDP and possibly (p)ppGpp with moderate affinity, with high nucleotide exchange rates and a fairly low GTP hydrolysis rate. Plays a role in control of the cell cycle, stress response, ribosome biogenesis and in those bacteria that undergo differentiation, in morphogenesis control. This is GTPase Obg from Mycoplasma genitalium (strain ATCC 33530 / DSM 19775 / NCTC 10195 / G37) (Mycoplasmoides genitalium).